A 604-amino-acid polypeptide reads, in one-letter code: Glucose oxidase 2 (604 aa).

The first 16 residues, Met1 to Ala16, serve as a signal peptide directing secretion. The FAD site is built by Leu49 and Thr50. An N-linked (GlcNAc...) asparagine glycan is attached at Asn63. Glu70 lines the FAD pocket. N-linked (GlcNAc...) asparagine glycosylation is present at Asn109. FAD is bound by residues Ser123, Asn127, Gly128, and Ser130. Residues Cys184 and Cys226 are joined by a disulfide bond. Asn214 carries N-linked (GlcNAc...) asparagine glycosylation. Residue Val270 coordinates FAD. Asn375, Asn408, and Asn517 each carry an N-linked (GlcNAc...) asparagine glycan. Residue His536 is the Proton acceptor of the active site. The O2 site is built by Arg557 and Val558. The FAD site is built by Gly569 and Met581. N-linked (GlcNAc...) asparagine glycosylation occurs at Asn600.

Belongs to the GMC oxidoreductase family. As to quaternary structure, homodimer. It depends on FAD as a cofactor.

The protein localises to the secreted. It is found in the cell wall. The protein resides in the cytoplasm. It localises to the extracellular space. Its subcellular location is the extracellular matrix. It catalyses the reaction beta-D-glucose + O2 = D-glucono-1,5-lactone + H2O2. Functionally, glucose oxidase catalyzes the oxidation of beta-D-glucose to D-glucono-delta-lactone and hydrogen peroxide in the presence of molecular oxygen. D-glucono-delta-lactone is sequentially hydrolyzed by lactonase to D-gluconic acid, and the resulting hydrogen peroxide is hydrolyzed by catalase to oxygen and water. Acts as a key factor contributing to fungal disease of apple. The production of gluconic acid leads to host tissue acidification that enhances the expression of pectolytic enzymes and the establishment of conditions for necrotrophic development of P.expansum. This chain is Glucose oxidase 2, found in Penicillium expansum (Blue mold rot fungus).